We begin with the raw amino-acid sequence, 324 residues long: MSDKLKSNKKLEGETFMKEGDKLSKTNIFRWKADWDSAALAYEKAANAFRSAKIYDSAKYCFLRLSLCQTHMDVYYLAAKSMENASAMAKELKETQECANLLLESCKLYRTNGNSFQAADTMTKAAKLLEDIDLNQTIKLLTDACELFELDDKDHFSGDTFKQTISMLLKHKKYTEAVDLMILQNRVFVKLEQNHDLHKSCLSVITISLATDDIVASKKYYEQFLDYPSFIHSQEGTTAQELITAFDNHDVDGVKKIVSRHIFNFLDNQVAKIAKNLSISKDSLNPTINSTAPQQQYSNTTTTTTNNTNNNNPTSQQDDDEDVL.

Residues 285-298 (NPTINSTAPQQQYS) show a composition bias toward polar residues. The tract at residues 285-324 (NPTINSTAPQQQYSNTTTTTTNNTNNNNPTSQQDDDEDVL) is disordered. Positions 299–312 (NTTTTTTNNTNNNN) are enriched in low complexity.

It belongs to the SNAP family. In terms of assembly, interacts with nsfA and probably SNARE proteins.

Its subcellular location is the cytoplasmic vesicle membrane. In terms of biological role, may be required for vesicular transport between the endoplasmic reticulum and the Golgi apparatus. Involved in vesicle fusion with nsfA and probably SNARE proteins. The chain is Gamma-soluble NSF attachment protein (snpC) from Dictyostelium discoideum (Social amoeba).